The primary structure comprises 626 residues: Cysteine desulfurase (626 aa).

2 disordered regions span residues 1–21 and 41–64; these read MTNT…SDPF and AGVS…PTTS. The cargo-loading domain stretch occupies residues 1–225; sequence MTNTVPSVPA…AGAVGFDIHQ (225 aa). The interval 226–626 is cysteine desulfurase domain; sequence VRRDFPILQE…RRIQTGSLAL (401 aa). Residue Lys444 is modified to N6-(pyridoxal phosphate)lysine. Cys582 serves as the catalytic Cysteine persulfide intermediate.

This sequence belongs to the class-V pyridoxal-phosphate-dependent aminotransferase family. Csd subfamily. In terms of assembly, there are 1-2 copies of this protein in each type 2A encapsulin shell. Pyridoxal 5'-phosphate is required as a cofactor.

The protein localises to the encapsulin nanocompartment. It carries out the reaction (sulfur carrier)-H + L-cysteine = (sulfur carrier)-SH + L-alanine. Its activity is regulated as follows. Encapsulated enzyme is 7-fold more active than encapsulated enzyme. Cargo protein of a type 2A encapsulin nanocompartment probably involved in sulfur metabolism. Cysteine desulfurases mobilize the sulfur from L-cysteine to yield L-alanine, an essential step in sulfur metabolism for biosynthesis of a variety of sulfur-containing biomolecules. The sequence is that of Cysteine desulfurase from Synechococcus elongatus (strain ATCC 33912 / PCC 7942 / FACHB-805) (Anacystis nidulans R2).